The primary structure comprises 457 residues: tRNA (guanine(37)-N(1))-methyltransferase (457 aa).

Residues His-240, 278 to 279 (DL), 306 to 307 (DG), and Asn-338 each bind S-adenosyl-L-methionine.

Belongs to the class I-like SAM-binding methyltransferase superfamily. TRM5/TYW2 family. In terms of assembly, monomer.

The protein localises to the mitochondrion matrix. The protein resides in the nucleus. Its subcellular location is the cytoplasm. The enzyme catalyses guanosine(37) in tRNA + S-adenosyl-L-methionine = N(1)-methylguanosine(37) in tRNA + S-adenosyl-L-homocysteine + H(+). Its function is as follows. Specifically methylates the N1 position of guanosine-37 in various cytoplasmic and mitochondrial tRNAs. Methylation is not dependent on the nature of the nucleoside 5' of the target nucleoside. This is the first step in the biosynthesis of wybutosine (yW), a modified base adjacent to the anticodon of tRNAs and required for accurate decoding. The protein is tRNA (guanine(37)-N(1))-methyltransferase of Drosophila melanogaster (Fruit fly).